The chain runs to 674 residues: Enzymatic polyprotein (674 aa).

The protease stretch occupies residues 40–130 (IELHCFVDTG…CQLYEPFIQF (91 aa)). Aspartate 47 is a catalytic residue. The region spanning 267-447 (LKVIKPSKSP…KKINFLGLEI (181 aa)) is the Reverse transcriptase domain.

This sequence belongs to the caulimoviridae enzymatic polyprotein family.

The enzyme catalyses DNA(n) + a 2'-deoxyribonucleoside 5'-triphosphate = DNA(n+1) + diphosphate. Its function is as follows. Encodes for at least two polypeptides: protease (PR) and reverse transcriptase (RT). The protease processes the polyprotein in cis. Reverse transcriptase is multifunctional enzyme that converts the viral RNA genome into dsDNA in viral cytoplasmic capsids. This enzyme displays a DNA polymerase activity that can copy either DNA or RNA templates, and a ribonuclease H (RNase H) activity that cleaves the RNA strand of RNA-DNA heteroduplexes in a partially processive 3'- to 5'-endonucleasic mode. Neo-synthesized pregenomic RNA (pgRNA) are encapsidated, and reverse-transcribed inside the nucleocapsid. Partial (+)DNA is synthesized from the (-)DNA template and generates the relaxed circular DNA (RC-DNA) genome. After budding and infection, the RC-DNA migrates in the nucleus, and is converted into a plasmid-like covalently closed circular DNA (cccDNA). The chain is Enzymatic polyprotein from Arabidopsis thaliana (Mouse-ear cress).